The chain runs to 409 residues: Isovaleryl-CoA dehydrogenase, mitochondrial (409 aa).

A mitochondrion-targeting transit peptide spans 1–22 (MAAAQRWLPGILRRGDGLARRL). FAD-binding positions include 151–160 (LAMSEPNSGS) and 184–186 (WCT). Position 160 (S160) interacts with substrate. Substrate contacts are provided by residues 206-207 (SK), Y261, and 268-271 (DLER). Residue E270 is the Proton acceptor of the active site. FAD contacts are provided by residues R296, Q307, and 364-368 (QCLGG). Position 391–392 (391–392 (AG)) interacts with substrate. 393-395 (TSE) serves as a coordination point for FAD.

It belongs to the acyl-CoA dehydrogenase family. As to quaternary structure, homodimer. It depends on FAD as a cofactor.

It is found in the mitochondrion. The enzyme catalyses 3-methylbutanoyl-CoA + oxidized [electron-transfer flavoprotein] + H(+) = 3-methylbut-2-enoyl-CoA + reduced [electron-transfer flavoprotein]. The protein operates within amino-acid degradation; L-leucine degradation; (S)-3-hydroxy-3-methylglutaryl-CoA from 3-isovaleryl-CoA: step 1/3. This chain is Isovaleryl-CoA dehydrogenase, mitochondrial, found in Oryza sativa subsp. japonica (Rice).